The sequence spans 236 residues: 2-C-methyl-D-erythritol 4-phosphate cytidylyltransferase (236 aa).

Belongs to the IspD/TarI cytidylyltransferase family. IspD subfamily. In terms of assembly, homodimer.

The enzyme catalyses 2-C-methyl-D-erythritol 4-phosphate + CTP + H(+) = 4-CDP-2-C-methyl-D-erythritol + diphosphate. The protein operates within isoprenoid biosynthesis; isopentenyl diphosphate biosynthesis via DXP pathway; isopentenyl diphosphate from 1-deoxy-D-xylulose 5-phosphate: step 2/6. Catalyzes the formation of 4-diphosphocytidyl-2-C-methyl-D-erythritol from CTP and 2-C-methyl-D-erythritol 4-phosphate (MEP). The polypeptide is 2-C-methyl-D-erythritol 4-phosphate cytidylyltransferase (Escherichia coli O17:K52:H18 (strain UMN026 / ExPEC)).